The sequence spans 148 residues: Large ribosomal subunit protein bL9 (148 aa).

This sequence belongs to the bacterial ribosomal protein bL9 family.

Functionally, binds to the 23S rRNA. The protein is Large ribosomal subunit protein bL9 of Pseudomonas syringae pv. tomato (strain ATCC BAA-871 / DC3000).